The primary structure comprises 468 residues: Methylenetetrahydrofolate--tRNA-(uracil-5-)-methyltransferase TrmFO (468 aa).

Residue 10 to 15 participates in FAD binding; it reads GGGLAG.

Belongs to the MnmG family. TrmFO subfamily. The cofactor is FAD.

The protein resides in the cytoplasm. The enzyme catalyses uridine(54) in tRNA + (6R)-5,10-methylene-5,6,7,8-tetrahydrofolate + NADH + H(+) = 5-methyluridine(54) in tRNA + (6S)-5,6,7,8-tetrahydrofolate + NAD(+). It carries out the reaction uridine(54) in tRNA + (6R)-5,10-methylene-5,6,7,8-tetrahydrofolate + NADPH + H(+) = 5-methyluridine(54) in tRNA + (6S)-5,6,7,8-tetrahydrofolate + NADP(+). Functionally, catalyzes the folate-dependent formation of 5-methyl-uridine at position 54 (M-5-U54) in all tRNAs. The polypeptide is Methylenetetrahydrofolate--tRNA-(uracil-5-)-methyltransferase TrmFO (Chelativorans sp. (strain BNC1)).